We begin with the raw amino-acid sequence, 409 residues long: Lactadherin (409 aa).

EGF-like domains lie at 2–41 (SGDFCDSSLCLNGGTCLLDQDPQKPFHCLCPEGFTGLICN) and 44–88 (EKGP…IHCE). 3 disulfide bridges follow: C6/C17, C11/C29, and C31/C40. A glycan (N-linked (GlcNAc...) asparagine) is linked at N41. Cystine bridges form between C48–C59, C53–C76, C78–C87, C91–C247, C234–C238, and C252–C409. A Cell attachment site motif is present at residues 67 to 69 (RGD). F5/8 type C domains lie at 91–247 (CNAP…LLGC) and 252–409 (CAEP…LLGC). N372 is a glycosylation site (N-linked (GlcNAc...) asparagine).

As to expression, mammary epithelial cell surfaces and spermatozoan. Also present in testis, epididymis, uterus, adrenal gland, tonsil, muscle, heart, lymphatic gland, thymus and kidney but not spleen, liver, lung or brain.

It is found in the membrane. It localises to the secreted. The protein localises to the cytoplasmic vesicle. Its subcellular location is the secretory vesicle. The protein resides in the acrosome membrane. Its function is as follows. Contributes to phagocytic removal of apoptotic cells in many tissues. Plays an important role in the maintenance of intestinal epithelial homeostasis and the promotion of mucosal healing. Promotes VEGF-dependent neovascularization. Specific ligand for the alpha-v/beta-3 and alpha-v/beta-5 receptors. Also binds to phosphatidylserine-enriched cell surfaces in a receptor-independent manner. Zona pellucida-binding protein which may play a role in gamete interaction. The polypeptide is Lactadherin (MFGE8) (Sus scrofa (Pig)).